The primary structure comprises 59 residues: Potassium channel toxin alpha-KTx 1.1 (59 aa).

The N-terminal stretch at 1–22 (MKILSVLLLALIICSIVGWSEA) is a signal peptide. Pyrrolidone carboxylic acid is present on Gln23. Intrachain disulfides connect Cys29-Cys50, Cys35-Cys55, and Cys39-Cys57. Residues 48-55 (GKCMNKKC) form an interaction with Ca(2+)-activated K(+) channels region.

It belongs to the short scorpion toxin superfamily. Potassium channel inhibitor family. Alpha-KTx 01 subfamily. Expressed by the venom gland.

The protein localises to the secreted. Its function is as follows. This toxin inhibits numerous potassium channels: shaker (Ki=227 nM), Kv1.2/KCNA2 (nanomolar range), Kv1.3/KCNA3 (nanomolar range), Kv1.5/KCNA5 (Kd&gt;100 nM), Kv1.6/KCNA6 (Ki=22 nM), KCa1.1/KCNMA1 (IC(50)=5.9 nM). It blocks channel activity by a simple bimolecular inhibition process. It also shows a weak interaction with nicotinic acetylcholine receptors (nAChR), suggesting it may weakly inhibit it. It also exhibits pH-specific antimicrobial activities against bacteria (B.subtilis, E.coli and S.aureus) and the fungus C.albicans. This Leiurus hebraeus (Hebrew deathstalker scorpion) protein is Potassium channel toxin alpha-KTx 1.1.